The primary structure comprises 146 residues: Mu-like prophage FluMu G protein 1 (146 aa).

It to phage Mu protein G.

The chain is Mu-like prophage FluMu G protein 1 from Haemophilus influenzae (strain ATCC 51907 / DSM 11121 / KW20 / Rd).